A 237-amino-acid polypeptide reads, in one-letter code: Ribosomal RNA small subunit methyltransferase G (237 aa).

S-adenosyl-L-methionine contacts are provided by residues glycine 78, phenylalanine 83, 129 to 130, and arginine 148; that span reads AE.

This sequence belongs to the methyltransferase superfamily. RNA methyltransferase RsmG family.

It is found in the cytoplasm. Specifically methylates the N7 position of a guanine in 16S rRNA. This is Ribosomal RNA small subunit methyltransferase G from Streptococcus pyogenes serotype M1.